A 366-amino-acid polypeptide reads, in one-letter code: DNA polymerase processivity factor (366 aa).

A compositionally biased stretch (basic residues) spans 1–16 (MERGSRDHHRDHRDHR). 2 disordered regions span residues 1-25 (MERG…REPP) and 286-366 (ESRF…RCVV). Residues 286–308 (ESRFERMGKQDDGKGDRNHKNED) are compositionally biased toward basic and acidic residues. Composition is skewed to polar residues over residues 313–322 (ASKQETQYKI) and 330–339 (KNGTAGSSLF).

It belongs to the herpesviridae polymerase accessory protein family.

Its function is as follows. Accessory subunit of the DNA polymerase that acts to increase the processivity of polymerization. The protein is DNA polymerase processivity factor (U27) of Homo sapiens (Human).